Reading from the N-terminus, the 293-residue chain is 4-hydroxy-tetrahydrodipicolinate synthase (293 aa).

T47 is a binding site for pyruvate. The Proton donor/acceptor role is filled by Y135. The active-site Schiff-base intermediate with substrate is K163. Residue V205 coordinates pyruvate.

This sequence belongs to the DapA family. Homotetramer; dimer of dimers.

It is found in the cytoplasm. The enzyme catalyses L-aspartate 4-semialdehyde + pyruvate = (2S,4S)-4-hydroxy-2,3,4,5-tetrahydrodipicolinate + H2O + H(+). Its pathway is amino-acid biosynthesis; L-lysine biosynthesis via DAP pathway; (S)-tetrahydrodipicolinate from L-aspartate: step 3/4. Catalyzes the condensation of (S)-aspartate-beta-semialdehyde [(S)-ASA] and pyruvate to 4-hydroxy-tetrahydrodipicolinate (HTPA). This chain is 4-hydroxy-tetrahydrodipicolinate synthase, found in Methylibium petroleiphilum (strain ATCC BAA-1232 / LMG 22953 / PM1).